The primary structure comprises 166 residues: Ribosome maturation factor RimM (166 aa).

A PRC barrel domain is found at 90 to 163 (EGQYFIKDII…KIVIKAVEEW (74 aa)).

This sequence belongs to the RimM family. In terms of assembly, binds ribosomal protein uS19.

The protein localises to the cytoplasm. Its function is as follows. An accessory protein needed during the final step in the assembly of 30S ribosomal subunit, possibly for assembly of the head region. Essential for efficient processing of 16S rRNA. May be needed both before and after RbfA during the maturation of 16S rRNA. It has affinity for free ribosomal 30S subunits but not for 70S ribosomes. The sequence is that of Ribosome maturation factor RimM from Clostridium acetobutylicum (strain ATCC 824 / DSM 792 / JCM 1419 / IAM 19013 / LMG 5710 / NBRC 13948 / NRRL B-527 / VKM B-1787 / 2291 / W).